Here is a 291-residue protein sequence, read N- to C-terminus: Phosphoribulokinase (291 aa).

12 to 20 (GSSGAGTTS) is an ATP binding site.

It belongs to the phosphoribulokinase family. In terms of assembly, homooctamer.

It catalyses the reaction D-ribulose 5-phosphate + ATP = D-ribulose 1,5-bisphosphate + ADP + H(+). It participates in carbohydrate biosynthesis; Calvin cycle. This is Phosphoribulokinase (cbbP) from Xanthobacter flavus.